A 233-amino-acid chain; its full sequence is MEQSEAGSAADSIITQFNTYEDFLDSQITALDLHYLEDEELARQLVELGYRGSGEVLKRDEFEARKAAAEASRLSQRTQQKTLSSAGKDPKDNFLKALAMREEANRNGKMTSVIFIRDKNAHGQEVSGYIDFAHRLKTEDFEVYFSGKKKLLPRPTDLSFYNWESHVSTSNPSPNYQVIAETSSGLLFKNKRDRKILNVDPKASPGDNSTRTSIQTDIYIQAVIYDHITRRKS.

Its subcellular location is the cytoplasm. It is found in the nucleus. In terms of biological role, may be involved in spermatogenesis. The chain is Cilia- and flagella-associated protein 299 from Xenopus laevis (African clawed frog).